A 303-amino-acid chain; its full sequence is Probable 5-dehydro-4-deoxyglucarate dehydratase (303 aa).

The protein belongs to the DapA family.

It catalyses the reaction 5-dehydro-4-deoxy-D-glucarate + H(+) = 2,5-dioxopentanoate + CO2 + H2O. Its pathway is carbohydrate acid metabolism; D-glucarate degradation; 2,5-dioxopentanoate from D-glucarate: step 2/2. This Pseudomonas syringae pv. syringae (strain B728a) protein is Probable 5-dehydro-4-deoxyglucarate dehydratase.